Reading from the N-terminus, the 211-residue chain is NADH-quinone oxidoreductase subunit I (211 aa).

2 4Fe-4S ferredoxin-type domains span residues 90-119 (RLWE…IDTK) and 129-158 (TEYS…HGGE). Residues cysteine 99, cysteine 102, cysteine 105, cysteine 109, cysteine 138, cysteine 141, cysteine 144, and cysteine 148 each contribute to the [4Fe-4S] cluster site.

It belongs to the complex I 23 kDa subunit family. NDH-1 is composed of 14 different subunits. Subunits NuoA, H, J, K, L, M, N constitute the membrane sector of the complex. [4Fe-4S] cluster is required as a cofactor.

The protein resides in the cell inner membrane. The catalysed reaction is a quinone + NADH + 5 H(+)(in) = a quinol + NAD(+) + 4 H(+)(out). Functionally, NDH-1 shuttles electrons from NADH, via FMN and iron-sulfur (Fe-S) centers, to quinones in the respiratory chain. The immediate electron acceptor for the enzyme in this species is believed to be ubiquinone. Couples the redox reaction to proton translocation (for every two electrons transferred, four hydrogen ions are translocated across the cytoplasmic membrane), and thus conserves the redox energy in a proton gradient. The polypeptide is NADH-quinone oxidoreductase subunit I (Sulfurimonas denitrificans (strain ATCC 33889 / DSM 1251) (Thiomicrospira denitrificans (strain ATCC 33889 / DSM 1251))).